The following is a 134-amino-acid chain: Translation initiation factor 2 subunit beta (134 aa).

It belongs to the eIF-2-beta/eIF-5 family. As to quaternary structure, heterotrimer composed of an alpha, a beta and a gamma chain.

Its function is as follows. eIF-2 functions in the early steps of protein synthesis by forming a ternary complex with GTP and initiator tRNA. In Pyrobaculum aerophilum (strain ATCC 51768 / DSM 7523 / JCM 9630 / CIP 104966 / NBRC 100827 / IM2), this protein is Translation initiation factor 2 subunit beta.